A 474-amino-acid chain; its full sequence is Trehalose-6-phosphate synthase (474 aa).

Residue arginine 10 participates in D-glucose 6-phosphate binding. Glycine 22–glycine 23 contributes to the UDP-alpha-D-glucose binding site. D-glucose 6-phosphate-binding residues include tyrosine 77 and aspartate 131. Arginine 263 and lysine 268 together coordinate UDP-alpha-D-glucose. Position 301 (arginine 301) interacts with D-glucose 6-phosphate. Residues phenylalanine 340 and leucine 366–glutamate 370 each bind UDP-alpha-D-glucose.

Belongs to the glycosyltransferase 20 family. In terms of assembly, homotetramer.

It catalyses the reaction D-glucose 6-phosphate + UDP-alpha-D-glucose = alpha,alpha-trehalose 6-phosphate + UDP + H(+). It participates in glycan biosynthesis; trehalose biosynthesis. Probably involved in the osmoprotection via the biosynthesis of trehalose. Catalyzes the transfer of glucose from UDP-alpha-D-glucose (UDP-Glc) to D-glucose 6-phosphate (Glc-6-P) to form trehalose-6-phosphate. Acts with retention of the anomeric configuration of the UDP-sugar donor. The chain is Trehalose-6-phosphate synthase from Shigella dysenteriae serotype 1 (strain Sd197).